A 351-amino-acid polypeptide reads, in one-letter code: Cell cycle control protein 50B (351 aa).

Residues 1-33 lie on the Cytoplasmic side of the membrane; sequence MTWSATARGAHQPDNTAFTQQRLPAWQPLLSAS. The chain crosses the membrane as a helical span at residues 34 to 54; sequence IALPLFFCAGLAFIGLGLGLY. Over 55–315 the chain is Exoplasmic loop; sequence YSSNGIKELE…SISWMGGKNP (261 aa). Asn75, Asn213, and Asn286 each carry an N-linked (GlcNAc...) asparagine glycan. Residues 316-336 form a helical membrane-spanning segment; it reads FLGIAYLVVGSLCILTGFVML. At 337-351 the chain is on the cytoplasmic side; sequence VVYIRYQDQDDDDEE.

Belongs to the CDC50/LEM3 family. Component of a P4-ATPase flippase complex which consists of a catalytic alpha subunit and an accessory beta subunit. Interacts with alpha subunits ATP8A1, ATP8B1, ATP8B2 and ATP8B4.

The protein resides in the cell membrane. In terms of biological role, accessory component of a P4-ATPase flippase complex which catalyzes the hydrolysis of ATP coupled to the transport of aminophospholipids from the outer to the inner leaflet of various membranes and ensures the maintenance of asymmetric distribution of phospholipids. Phospholipid translocation also seems to be implicated in vesicle formation and in uptake of lipid signaling molecules. The beta subunit may assist in binding of the phospholipid substrate. Can mediate the export of alpha subunits ATP8A1, ATP8B1, ATP8B2 and ATP8B4 from the ER to the plasma membrane. The polypeptide is Cell cycle control protein 50B (TMEM30B) (Homo sapiens (Human)).